The following is a 246-amino-acid chain: 4-hydroxy-tetrahydrodipicolinate reductase (246 aa).

Residues 8-13 (GAKGRM), 74-76 (GTT), and 101-104 (APNF) each bind NAD(+). Histidine 131 functions as the Proton donor/acceptor in the catalytic mechanism. (S)-2,3,4,5-tetrahydrodipicolinate is bound at residue histidine 132. The active-site Proton donor is the lysine 135. Position 141–142 (141–142 (GT)) interacts with (S)-2,3,4,5-tetrahydrodipicolinate.

It belongs to the DapB family.

The protein localises to the cytoplasm. The enzyme catalyses (S)-2,3,4,5-tetrahydrodipicolinate + NAD(+) + H2O = (2S,4S)-4-hydroxy-2,3,4,5-tetrahydrodipicolinate + NADH + H(+). It catalyses the reaction (S)-2,3,4,5-tetrahydrodipicolinate + NADP(+) + H2O = (2S,4S)-4-hydroxy-2,3,4,5-tetrahydrodipicolinate + NADPH + H(+). It participates in amino-acid biosynthesis; L-lysine biosynthesis via DAP pathway; (S)-tetrahydrodipicolinate from L-aspartate: step 4/4. Its function is as follows. Catalyzes the conversion of 4-hydroxy-tetrahydrodipicolinate (HTPA) to tetrahydrodipicolinate. In Cutibacterium acnes (strain DSM 16379 / KPA171202) (Propionibacterium acnes), this protein is 4-hydroxy-tetrahydrodipicolinate reductase.